A 191-amino-acid polypeptide reads, in one-letter code: Guanylate kinase (191 aa).

The Guanylate kinase-like domain maps to 4 to 182 (GRLIVVSGPS…AREEMIEIMR (179 aa)). 11–18 (GPSGAGKS) serves as a coordination point for ATP.

The protein belongs to the guanylate kinase family.

The protein resides in the cytoplasm. The catalysed reaction is GMP + ATP = GDP + ADP. In terms of biological role, essential for recycling GMP and indirectly, cGMP. The polypeptide is Guanylate kinase (Rubrobacter xylanophilus (strain DSM 9941 / JCM 11954 / NBRC 16129 / PRD-1)).